The primary structure comprises 367 residues: 4-hydroxy-3-methylbut-2-en-1-yl diphosphate synthase (flavodoxin) (367 aa).

Cysteine 268, cysteine 271, cysteine 303, and glutamate 310 together coordinate [4Fe-4S] cluster.

This sequence belongs to the IspG family. [4Fe-4S] cluster is required as a cofactor.

It carries out the reaction (2E)-4-hydroxy-3-methylbut-2-enyl diphosphate + oxidized [flavodoxin] + H2O + 2 H(+) = 2-C-methyl-D-erythritol 2,4-cyclic diphosphate + reduced [flavodoxin]. It functions in the pathway isoprenoid biosynthesis; isopentenyl diphosphate biosynthesis via DXP pathway; isopentenyl diphosphate from 1-deoxy-D-xylulose 5-phosphate: step 5/6. Functionally, converts 2C-methyl-D-erythritol 2,4-cyclodiphosphate (ME-2,4cPP) into 1-hydroxy-2-methyl-2-(E)-butenyl 4-diphosphate. The chain is 4-hydroxy-3-methylbut-2-en-1-yl diphosphate synthase (flavodoxin) from Halalkalibacterium halodurans (strain ATCC BAA-125 / DSM 18197 / FERM 7344 / JCM 9153 / C-125) (Bacillus halodurans).